We begin with the raw amino-acid sequence, 262 residues long: 3-deoxy-manno-octulosonate cytidylyltransferase (262 aa).

Belongs to the KdsB family.

The protein resides in the cytoplasm. It carries out the reaction 3-deoxy-alpha-D-manno-oct-2-ulosonate + CTP = CMP-3-deoxy-beta-D-manno-octulosonate + diphosphate. It participates in nucleotide-sugar biosynthesis; CMP-3-deoxy-D-manno-octulosonate biosynthesis; CMP-3-deoxy-D-manno-octulosonate from 3-deoxy-D-manno-octulosonate and CTP: step 1/1. Its pathway is bacterial outer membrane biogenesis; lipopolysaccharide biosynthesis. Functionally, activates KDO (a required 8-carbon sugar) for incorporation into bacterial lipopolysaccharide in Gram-negative bacteria. This chain is 3-deoxy-manno-octulosonate cytidylyltransferase, found in Blochmanniella pennsylvanica (strain BPEN).